We begin with the raw amino-acid sequence, 506 residues long: 26S proteasome non-ATPase regulatory subunit 5 (506 aa).

The protein belongs to the proteasome subunit S5B/HSM3 family. As to quaternary structure, interacts with PI31; this interaction is increased by PI31 ADP-ribosylation. Interacts with Rpt2.

Its function is as follows. Acts as a chaperone during the assembly of the 26S proteasome. The sequence is that of 26S proteasome non-ATPase regulatory subunit 5 from Drosophila melanogaster (Fruit fly).